The chain runs to 945 residues: Isoleucine--tRNA ligase 1 (945 aa).

Positions 66 to 76 (PYANGDIHLGH) match the 'HIGH' region motif. Glu-581 lines the L-isoleucyl-5'-AMP pocket. The short motif at 622–626 (KMSKS) is the 'KMSKS' region element. Lys-625 provides a ligand contact to ATP. Residues Cys-908, Cys-911, Cys-928, and Cys-931 each contribute to the Zn(2+) site.

It belongs to the class-I aminoacyl-tRNA synthetase family. IleS type 1 subfamily. As to quaternary structure, monomer. The cofactor is Zn(2+).

It is found in the cytoplasm. The enzyme catalyses tRNA(Ile) + L-isoleucine + ATP = L-isoleucyl-tRNA(Ile) + AMP + diphosphate. Catalyzes the attachment of isoleucine to tRNA(Ile). As IleRS can inadvertently accommodate and process structurally similar amino acids such as valine, to avoid such errors it has two additional distinct tRNA(Ile)-dependent editing activities. One activity is designated as 'pretransfer' editing and involves the hydrolysis of activated Val-AMP. The other activity is designated 'posttransfer' editing and involves deacylation of mischarged Val-tRNA(Ile). In Burkholderia mallei (strain ATCC 23344), this protein is Isoleucine--tRNA ligase 1.